Here is a 356-residue protein sequence, read N- to C-terminus: Arginine kinase Lit v 2.0101 (356 aa).

Residues 9-91 (KLEAGFKKLE…FDPIIEDYHV (83 aa)) form the Phosphagen kinase N-terminal domain. Residue 64–68 (GVGIY) participates in L-arginine binding. The region spanning 119 to 356 (FVISTRVRCG…LELIKIEKEM (238 aa)) is the Phosphagen kinase C-terminal domain. Residues 122 to 126 (STRVR) and histidine 185 contribute to the ATP site. Glutamate 225 provides a ligand contact to L-arginine. Arginine 229 is a binding site for ATP. Cysteine 271 is an L-arginine binding site. ATP contacts are provided by residues 280–284 (RASVH) and 309–314 (RGTRGE). Glutamate 314 serves as a coordination point for L-arginine.

The protein belongs to the ATP:guanido phosphotransferase family. Monomer. Muscle (at protein level).

It carries out the reaction L-arginine + ATP = N(omega)-phospho-L-arginine + ADP + H(+). It catalyses the reaction dTDP + ATP = dTTP + ADP. Functionally, catalyzes the reversible transfer of high energy ATP gamma-phosphate group to L-arginine. Has nucleoside diphosphate kinase-like activity toward dTDP. Binds and phosphorylates dTDP using ATP as a phosphate donor. Does not phosphorylate dADP, dCDP, dGDP, dTMP or thymidine. This chain is Arginine kinase Lit v 2.0101, found in Penaeus vannamei (Whiteleg shrimp).